The sequence spans 551 residues: Scaffold protein D13 ortholog (551 aa).

The protein belongs to the poxviridae protein D13 family. As to quaternary structure, homotrimer. Self-assembles to form a layer. Interacts with A17 (via N-terminus); this interaction is necessary for D13 association with membranes.

The protein localises to the membrane. In terms of biological role, scaffold protein which forms a transitory spherical honeycomb lattice providing curvature and rigidity to the convex membrane of crescent and immature virions (IV). This association occurs concomitantly with viral membrane formation. Targeted by the drug rifampicin, which prevents the formation of this lattice, and hence virus morphogenesis. In the presence of rifampicin, irregularly shaped membranes that lack the honeycomb layer accumulate around areas of electron-dense viroplasm. This layer is lost from virions during maturation from IV to mature virion (MV), through the proteolysis of A17 N-terminus. In Sus scrofa (Pig), this protein is Scaffold protein D13 ortholog.